A 203-amino-acid chain; its full sequence is Urease accessory protein UreE (203 aa).

Residues Glu170–His190 are compositionally biased toward basic and acidic residues. Residues Glu170 to Arg203 form a disordered region.

This sequence belongs to the UreE family.

The protein resides in the cytoplasm. Its function is as follows. Involved in urease metallocenter assembly. Binds nickel. Probably functions as a nickel donor during metallocenter assembly. In Burkholderia pseudomallei (strain 1710b), this protein is Urease accessory protein UreE.